We begin with the raw amino-acid sequence, 509 residues long: Maturase K (509 aa).

Belongs to the intron maturase 2 family. MatK subfamily.

Its subcellular location is the plastid. It is found in the chloroplast. In terms of biological role, usually encoded in the trnK tRNA gene intron. Probably assists in splicing its own and other chloroplast group II introns. In Thuja occidentalis (Northern white-cedar), this protein is Maturase K.